The primary structure comprises 342 residues: Pre-mRNA-splicing factor 18 (342 aa).

N-acetylmethionine is present on methionine 1.

Belongs to the PRP18 family. In terms of assembly, heterodimer with PPIH. Interacts with PRPF4 and with the spliceosome. Part of a complex containing U4/U6 snRNPs.

Its subcellular location is the nucleus speckle. Functionally, participates in the second step of pre-mRNA splicing. This Pongo abelii (Sumatran orangutan) protein is Pre-mRNA-splicing factor 18 (PRPF18).